Consider the following 541-residue polypeptide: 2-hydroxyacylsphingosine 1-beta-galactosyltransferase (541 aa).

A signal peptide spans 1-20 (MKSYTPYFMLLWSAVGIARA). N-linked (GlcNAc...) asparagine glycans are attached at residues Asn-78, Asn-333, and Asn-442. The helical transmembrane segment at 472–492 (YFLLDIAFVLLLGAVALYFIV) threads the bilayer.

It belongs to the UDP-glycosyltransferase family. In terms of tissue distribution, brain, restricted to the oligodendrocyte-containing cell layers of cerebrum and cerebellum.

It is found in the membrane. The protein localises to the endoplasmic reticulum. The enzyme catalyses an N-acylsphing-4-enine + UDP-alpha-D-galactose = a beta-D-galactosyl-(1&lt;-&gt;1')-N-acylsphing-4-enine + UDP + H(+). The catalysed reaction is N-(2-hydroxy-hexanoyl)-sphing-4-enine + UDP-alpha-D-galactose = N-(2-hydroxy-hexanoyl)-beta-D-galactosyl-sphing-4-enine + UDP + H(+). It catalyses the reaction N-(2-hydroxy-hexanoyl)-sphinganine + UDP-alpha-D-galactose = N-(2-hydroxyhexanoyl)-beta-D-galactosylsphinganine + UDP + H(+). It carries out the reaction an N-acyl-sphingoid base + UDP-alpha-D-galactose = a D-galactosylceramide + UDP + H(+). It participates in sphingolipid metabolism; galactosylceramide biosynthesis. Functionally, catalyzes the transfer of galactose to ceramide, a key enzymatic step in the biosynthesis of galactocerebrosides, which are abundant sphingolipids of the myelin membrane of the central nervous system and peripheral nervous system. Galactosylates both hydroxy- and non-hydroxy fatty acid-containing ceramides and diglycerides. The sequence is that of 2-hydroxyacylsphingosine 1-beta-galactosyltransferase from Rattus norvegicus (Rat).